The sequence spans 437 residues: ATP-dependent RNA helicase RhlB (437 aa).

A Q motif motif is present at residues 9-37 (QKFADLGLQPQVTEGLEKKGFEYCTPIQA). Residues 40 to 219 (LPVLLTGQDI…FEHMHNPEHV (180 aa)) enclose the Helicase ATP-binding domain. 53–60 (AQTGTGKT) is a binding site for ATP. The DEAD box motif lies at 165–168 (DEAD). The Helicase C-terminal domain occupies 245–390 (ALLQTLIEEE…VSEYDASALI (146 aa)). Positions 397–437 (IRMRAPRVQQRRTNTGGTRSGNRKPQGRRPRQPRQSAPKQS) are disordered. Positions 417–428 (GNRKPQGRRPRQ) are enriched in basic residues.

Belongs to the DEAD box helicase family. RhlB subfamily. Component of the RNA degradosome, which is a multiprotein complex involved in RNA processing and mRNA degradation.

The protein resides in the cytoplasm. The enzyme catalyses ATP + H2O = ADP + phosphate + H(+). Functionally, DEAD-box RNA helicase involved in RNA degradation. Has RNA-dependent ATPase activity and unwinds double-stranded RNA. This Vibrio parahaemolyticus serotype O3:K6 (strain RIMD 2210633) protein is ATP-dependent RNA helicase RhlB.